Consider the following 120-residue polypeptide: Phosphoribosyl-AMP cyclohydrolase (120 aa).

Asp74 lines the Mg(2+) pocket. Cys75 contacts Zn(2+). Residues Asp76 and Asp78 each contribute to the Mg(2+) site. Residues Cys91 and Cys98 each coordinate Zn(2+).

The protein belongs to the PRA-CH family. Homodimer. Mg(2+) serves as cofactor. Requires Zn(2+) as cofactor.

The protein localises to the cytoplasm. It carries out the reaction 1-(5-phospho-beta-D-ribosyl)-5'-AMP + H2O = 1-(5-phospho-beta-D-ribosyl)-5-[(5-phospho-beta-D-ribosylamino)methylideneamino]imidazole-4-carboxamide. It functions in the pathway amino-acid biosynthesis; L-histidine biosynthesis; L-histidine from 5-phospho-alpha-D-ribose 1-diphosphate: step 3/9. In terms of biological role, catalyzes the hydrolysis of the adenine ring of phosphoribosyl-AMP. The protein is Phosphoribosyl-AMP cyclohydrolase of Natronomonas pharaonis (strain ATCC 35678 / DSM 2160 / CIP 103997 / JCM 8858 / NBRC 14720 / NCIMB 2260 / Gabara) (Halobacterium pharaonis).